The primary structure comprises 161 residues: Nucleotide-binding protein Rmet_2899 (161 aa).

Belongs to the YajQ family.

Functionally, nucleotide-binding protein. The polypeptide is Nucleotide-binding protein Rmet_2899 (Cupriavidus metallidurans (strain ATCC 43123 / DSM 2839 / NBRC 102507 / CH34) (Ralstonia metallidurans)).